A 65-amino-acid polypeptide reads, in one-letter code: Small ribosomal subunit protein bS21 (65 aa).

The segment covering 43 to 52 (EKKRVKEALA) has biased composition (basic and acidic residues). The tract at residues 43–65 (EKKRVKEALARKRSRKKARKEQD) is disordered. Over residues 53 to 65 (RKRSRKKARKEQD) the composition is skewed to basic residues.

This sequence belongs to the bacterial ribosomal protein bS21 family.

The sequence is that of Small ribosomal subunit protein bS21 from Koribacter versatilis (strain Ellin345).